The sequence spans 428 residues: Glutamate-1-semialdehyde 2,1-aminomutase (428 aa).

Lysine 265 is subject to N6-(pyridoxal phosphate)lysine.

The protein belongs to the class-III pyridoxal-phosphate-dependent aminotransferase family. HemL subfamily. In terms of assembly, homodimer. Pyridoxal 5'-phosphate serves as cofactor.

It is found in the cytoplasm. The enzyme catalyses (S)-4-amino-5-oxopentanoate = 5-aminolevulinate. It participates in porphyrin-containing compound metabolism; protoporphyrin-IX biosynthesis; 5-aminolevulinate from L-glutamyl-tRNA(Glu): step 2/2. This Ruthia magnifica subsp. Calyptogena magnifica protein is Glutamate-1-semialdehyde 2,1-aminomutase.